A 290-amino-acid chain; its full sequence is MVDLTIEKTKYPRAFVVGSPIHHSKSPRIHNFWLKQYGLQGEYLAQEVTSEKFNHFITSFKKIGFCGGNVTLPHKQEAFRLADYKDKTATIIGAANTLWYEGDKLCATNSDTYGFSANLDDFASDWGGETALVFGAGGAARAILYALKERGFEQIYLVNRTKQRADNLAQHFGKNIKVYDWHKIHEILYQADLIVNTTSIGIKNPEEKSDSFFCDFHKAKKTALVTDIVYTPLITPFLQQAKSCGLKTVDGLGMLLHQAVIGFERWFGVRPQVTKALRTAILEDMSEERE.

Shikimate is bound by residues 24-26 (SKS) and threonine 71. Residue lysine 75 is the Proton acceptor of the active site. 2 residues coordinate shikimate: asparagine 96 and aspartate 111. Residues 135–139 (GAGGA), 159–164 (NRTKQR), and isoleucine 228 each bind NADP(+). Tyrosine 230 is a binding site for shikimate. Glycine 251 is a binding site for NADP(+).

The protein belongs to the shikimate dehydrogenase family. Homodimer.

It catalyses the reaction shikimate + NADP(+) = 3-dehydroshikimate + NADPH + H(+). Its pathway is metabolic intermediate biosynthesis; chorismate biosynthesis; chorismate from D-erythrose 4-phosphate and phosphoenolpyruvate: step 4/7. In terms of biological role, involved in the biosynthesis of the chorismate, which leads to the biosynthesis of aromatic amino acids. Catalyzes the reversible NADPH linked reduction of 3-dehydroshikimate (DHSA) to yield shikimate (SA). The polypeptide is Shikimate dehydrogenase (NADP(+)) (Bartonella tribocorum (strain CIP 105476 / IBS 506)).